The primary structure comprises 181 residues: Interleukin-10 (181 aa).

The first 19 residues, 1–19 (MHGSALLCCCLVLLAGVGA), serve as a signal peptide directing secretion. 2 disulfide bridges follow: Cys-31/Cys-129 and Cys-81/Cys-135. N-linked (GlcNAc...) asparagine glycosylation occurs at Asn-137.

The protein belongs to the IL-10 family. In terms of assembly, homodimer. Interacts with IL10RA and IL10RB.

Its subcellular location is the secreted. Major immune regulatory cytokine that acts on many cells of the immune system where it has profound anti-inflammatory functions, limiting excessive tissue disruption caused by inflammation. Mechanistically, IL10 binds to its heterotetrameric receptor comprising IL10RA and IL10RB leading to JAK1 and STAT2-mediated phosphorylation of STAT3. In turn, STAT3 translocates to the nucleus where it drives expression of anti-inflammatory mediators. Targets antigen-presenting cells (APCs) such as macrophages and monocytes and inhibits their release of pro-inflammatory cytokines including granulocyte-macrophage colony-stimulating factor /GM-CSF, granulocyte colony-stimulating factor/G-CSF, IL-1 alpha, IL-1 beta, IL-6, IL-8 and TNF-alpha. Also interferes with antigen presentation by reducing the expression of MHC-class II and co-stimulatory molecules, thereby inhibiting their ability to induce T cell activation. In addition, controls the inflammatory response of macrophages by reprogramming essential metabolic pathways including mTOR signaling. The chain is Interleukin-10 (IL10) from Canis lupus familiaris (Dog).